A 350-amino-acid polypeptide reads, in one-letter code: MGGVLTLDAAFLGSVPADLGKALLERARADCGPVLHRAIESMREPLATMAGYHLGWWNADRSTAAGSSGKYFRAALVYAAAAACGGDVGDATPVSAAVELVHNFTLLHDDVMDGDATRRGRPTVWSVWGVGVAILLGDALHATAVRILTGLTDECVAVRAIRRLQMSCLDLCIGQFEDCLLEGQPEVTVDDYLRMAAGKTAALTGCCCALGALVANADDATIAALERFGHELGLAFQCVDDLIGIWGDPGVTGKPVGNDLARRKATLPVVAALNSRSEAATELAALYQAPAAMTASDVERATALVKVAGGGHVAQRCADERIQAAIAALPDAVRSPDLIALSQLICRREC.

3 residues coordinate isopentenyl diphosphate: Lys-70, Arg-73, and His-102. The Mg(2+) site is built by Asp-109 and Asp-113. Residues 109-113 (DDVMD) carry the DDXXD motif motif. Residue Arg-119 coordinates isopentenyl diphosphate. Residues 240–244 (DDLIG) carry the DDXXD motif motif.

It belongs to the FPP/GGPP synthase family. It depends on Mg(2+) as a cofactor.

It carries out the reaction isopentenyl diphosphate + (2E,6E)-farnesyl diphosphate = (2E,6E,10E)-geranylgeranyl diphosphate + diphosphate. Its pathway is isoprenoid biosynthesis; geranylgeranyl diphosphate biosynthesis; geranylgeranyl diphosphate from farnesyl diphosphate and isopentenyl diphosphate: step 1/1. Its function is as follows. Catalyzes the condensation of isopentenyl pyrophosphate (IPP) with (2E,6E)-farnesyl diphosphate (E,E-FPP) to yield geranylgeranyl diphosphate (GGPP). The polypeptide is Geranylgeranyl diphosphate synthase (Mycobacterium tuberculosis (strain ATCC 25618 / H37Rv)).